Here is a 455-residue protein sequence, read N- to C-terminus: Chromosomal replication initiator protein DnaA 2 (455 aa).

Residues 1-95 form a domain I, interacts with DnaA modulators region; that stretch reads MLTCNDCSTW…KRSSPLVTPS (95 aa). The domain II stretch occupies residues 96–112; it reads IAKPATEVSEENKDFQL. The interval 113–328 is domain III, AAA+ region; the sequence is KLNGAYRFDN…GAINKLTAYC (216 aa). Positions 157, 159, 160, and 161 each coordinate ATP. The segment at 329–455 is domain IV, binds dsDNA; that stretch reads LLFNKPLTET…IAIDSPQHFV (127 aa).

Belongs to the DnaA family. In terms of assembly, oligomerizes as a right-handed, spiral filament on DNA at oriC.

The protein resides in the cytoplasm. Its function is as follows. Plays an essential role in the initiation and regulation of chromosomal replication. ATP-DnaA binds to the origin of replication (oriC) to initiate formation of the DNA replication initiation complex once per cell cycle. Binds the DnaA box (a 9 base pair repeat at the origin) and separates the double-stranded (ds)DNA. Forms a right-handed helical filament on oriC DNA; dsDNA binds to the exterior of the filament while single-stranded (ss)DNA is stabiized in the filament's interior. The ATP-DnaA-oriC complex binds and stabilizes one strand of the AT-rich DNA unwinding element (DUE), permitting loading of DNA polymerase. After initiation quickly degrades to an ADP-DnaA complex that is not apt for DNA replication. Binds acidic phospholipids. The chain is Chromosomal replication initiator protein DnaA 2 from Chlamydia trachomatis serovar D (strain ATCC VR-885 / DSM 19411 / UW-3/Cx).